Here is a 252-residue protein sequence, read N- to C-terminus: Imidazole glycerol phosphate synthase subunit HisF (252 aa).

Residues Asp-11 and Asp-130 contribute to the active site.

The protein belongs to the HisA/HisF family. Heterodimer of HisH and HisF.

It is found in the cytoplasm. The enzyme catalyses 5-[(5-phospho-1-deoxy-D-ribulos-1-ylimino)methylamino]-1-(5-phospho-beta-D-ribosyl)imidazole-4-carboxamide + L-glutamine = D-erythro-1-(imidazol-4-yl)glycerol 3-phosphate + 5-amino-1-(5-phospho-beta-D-ribosyl)imidazole-4-carboxamide + L-glutamate + H(+). It functions in the pathway amino-acid biosynthesis; L-histidine biosynthesis; L-histidine from 5-phospho-alpha-D-ribose 1-diphosphate: step 5/9. Its function is as follows. IGPS catalyzes the conversion of PRFAR and glutamine to IGP, AICAR and glutamate. The HisF subunit catalyzes the cyclization activity that produces IGP and AICAR from PRFAR using the ammonia provided by the HisH subunit. This Bacillus cereus (strain Q1) protein is Imidazole glycerol phosphate synthase subunit HisF.